We begin with the raw amino-acid sequence, 1824 residues long: Afadin (1824 aa).

Residues Phe-39–Asp-133 form the Ras-associating 1 domain. The disordered stretch occupies residues Leu-128–Glu-194. Residues Glu-146–Asp-185 adopt a coiled-coil conformation. Residues Thr-160–Arg-172 are compositionally biased toward basic residues. Over residues Glu-173–Gln-189 the composition is skewed to basic and acidic residues. 3 positions are modified to phosphoserine: Ser-216, Ser-246, and Ser-256. A Ras-associating 2 domain is found at Ser-246–Pro-348. Residues Asp-349–Asp-371 show a composition bias toward basic and acidic residues. The disordered stretch occupies residues Asp-349–Thr-378. 2 positions are modified to phosphoserine: Ser-391 and Ser-424. One can recognise an FHA domain in the interval Thr-426–Gly-492. A phosphoserine mark is found at Ser-512, Ser-557, Ser-562, Ser-589, and Ser-655. The interval Phe-534–Ser-595 is disordered. A compositionally biased stretch (basic and acidic residues) spans Gln-580–Thr-591. The region spanning Asn-668–Asn-908 is the Dilute domain. A PDZ domain is found at Ile-1007–Gly-1093. Phosphoserine occurs at positions 1083, 1107, 1126, 1140, 1143, 1172, 1173, 1182, and 1199. The disordered stretch occupies residues Ser-1107 to Thr-1223. Residues Ile-1113–Gly-1128 are compositionally biased toward basic and acidic residues. Over residues Tyr-1132–Ser-1143 the composition is skewed to polar residues. Residues Ser-1152–Ser-1172 show a composition bias toward basic and acidic residues. Residues Ala-1190–Gln-1210 are compositionally biased toward polar residues. A phosphothreonine mark is found at Thr-1211 and Thr-1232. 3 disordered regions span residues Ala-1235–Pro-1473, Ser-1501–Gln-1528, and Arg-1569–Lys-1824. Ser-1238 carries the post-translational modification Phosphoserine. 2 stretches are compositionally biased toward basic and acidic residues: residues Tyr-1252–Ser-1262 and Arg-1274–Ser-1302. Ser-1275 is subject to Phosphoserine. The span at Ser-1309–Ser-1318 shows a compositional bias: low complexity. Positions Ser-1325 to Lys-1337 are enriched in polar residues. The residue at position 1328 (Ser-1328) is a Phosphoserine. Position 1330 is a phosphothreonine (Thr-1330). Over residues Thr-1345–Val-1356 the composition is skewed to low complexity. Over residues Leu-1364–Val-1373 the composition is skewed to pro residues. Residues Ala-1407–Leu-1441 show a composition bias toward basic and acidic residues. Residues Glu-1408 to Ser-1448 adopt a coiled-coil conformation. Phosphoserine is present on residues Ser-1501 and Ser-1512. The span at Pro-1515–Gln-1528 shows a compositional bias: basic and acidic residues. Positions Lys-1523–Gln-1667 form a coiled coil. A compositionally biased stretch (acidic residues) spans Glu-1578–Asp-1589. Over residues Leu-1597 to Glu-1677 the composition is skewed to basic and acidic residues. The segment covering Pro-1694 to Gln-1709 has biased composition (pro residues). Phosphoserine is present on residues Ser-1696, Ser-1721, Ser-1774, Ser-1779, and Ser-1799. Basic and acidic residues predominate over residues Asp-1762 to Asp-1776. Lys-1807 is modified (N6-acetyllysine). Basic and acidic residues predominate over residues Lys-1813–Lys-1824.

As to quaternary structure, homodimer. Interacts with F-actin, nectin and NECTIN3. Essential for the association of nectin and E-cadherin. Isoform 1/s-afadin does not interact with F-actin. Interacts with ZO-1 and occludin, but probably in an indirect manner. Interacts with RIT1 and RIT2. Interacts with NRXN1 and BCR. Interacts with ADAM10; the interaction locks ADAM10 at adherens junctions following ADAM10 recruitment to adherens junctions by TSPAN33.

The protein localises to the cell junction. The protein resides in the adherens junction. In terms of biological role, belongs to an adhesion system, probably together with the E-cadherin-catenin system, which plays a role in the organization of homotypic, interneuronal and heterotypic cell-cell adherens junctions (AJs). Nectin- and actin-filament-binding protein that connects nectin to the actin cytoskeleton. May play a key role in the organization of epithelial structures of the embryonic ectoderm. Essential for the organization of adherens junctions. The chain is Afadin from Homo sapiens (Human).